Consider the following 615-residue polypeptide: TORTIFOLIA1-like protein 3 (615 aa).

HEAT repeat units lie at residues 44–81, 86–123, 125–163, 168–205, and 213–250; these read GNLQ…SLPL, PFLS…RTTK, PFYS…SASD, RLGQ…AGGL, and GGLK…MERN. Residues 288–446 are disordered; sequence VPDLSEEVSP…HHVLSENPNS (159 aa). A compositionally biased stretch (polar residues) spans 318 to 347; it reads RVGSTPAKSRTHLVNRSTPPGSSLATTARK. Over residues 391 to 406 the composition is skewed to basic and acidic residues; the sequence is DEQHCDHDENAKETSH. Polar residues predominate over residues 407–426; sequence SSHNTVQKLGGVSSSLNGNI. S456 bears the Phosphoserine mark.

This is TORTIFOLIA1-like protein 3 from Arabidopsis thaliana (Mouse-ear cress).